The following is a 163-amino-acid chain: 3-isopropylmalate dehydratase small subunit (163 aa).

It belongs to the LeuD family. LeuD type 2 subfamily. Heterodimer of LeuC and LeuD.

It catalyses the reaction (2R,3S)-3-isopropylmalate = (2S)-2-isopropylmalate. It functions in the pathway amino-acid biosynthesis; L-leucine biosynthesis; L-leucine from 3-methyl-2-oxobutanoate: step 2/4. Its function is as follows. Catalyzes the isomerization between 2-isopropylmalate and 3-isopropylmalate, via the formation of 2-isopropylmaleate. In Thermococcus kodakarensis (strain ATCC BAA-918 / JCM 12380 / KOD1) (Pyrococcus kodakaraensis (strain KOD1)), this protein is 3-isopropylmalate dehydratase small subunit.